Reading from the N-terminus, the 110-residue chain is UPF0060 membrane protein Dtpsy_1668 (110 aa).

4 consecutive transmembrane segments (helical) span residues 7–27 (LALF…PWLW), 33–53 (SAWL…LLTL), 63–83 (AAYG…VDGV), and 86–106 (GPWD…IAFA).

It belongs to the UPF0060 family.

The protein localises to the cell inner membrane. This Acidovorax ebreus (strain TPSY) (Diaphorobacter sp. (strain TPSY)) protein is UPF0060 membrane protein Dtpsy_1668.